A 440-amino-acid polypeptide reads, in one-letter code: Inner membrane metabolite transport protein YhjE (440 aa).

Residues 1-34 are Cytoplasmic-facing; sequence MQATATTLDHEQEYTPINSRNKVLVASLIGTAIE. A helical membrane pass occupies residues 35–55; it reads FFDFYIYATAAVIVFPHIFFP. Residues 56 to 66 are Periplasmic-facing; that stretch reads QGDPTAATLQS. Residues 67 to 87 form a helical membrane-spanning segment; that stretch reads LATFAIAFVARPIGSAVFGHF. Residues 88 to 108 are Cytoplasmic-facing; that stretch reads GDRVGRKATLVASLLTMGIST. 2 helical membrane passes run 109–129 and 130–150; these read VVIGLLPGYATIGIFAPLLLA and LARFGQGLGLGGEWGGAALLA. The Cytoplasmic segment spans residues 151-167; the sequence is TENAPPRKRALYGSFPQ. The helical transmembrane segment at 168-188 threads the bilayer; the sequence is LGAPIGFFFANGTFLLLSWLL. The Periplasmic segment spans residues 189-192; sequence TDEQ. A helical membrane pass occupies residues 193-213; it reads FMSWGWRVPFIFSAVLVIIGL. The Cytoplasmic segment spans residues 214–248; sequence YVRVSLHESPVFEKVAKAKKQVKIPLGTLLTKHVR. Residues 249–269 traverse the membrane as a helical segment; that stretch reads VTVLGTFIMLATYTLFYIMTV. Topologically, residues 270–289 are periplasmic; that stretch reads YSMTFSTAAAPVGLGLPRNE. The chain crosses the membrane as a helical span at residues 290–310; that stretch reads VLWMLMMAVIGFGVMVPVAGL. Residues 311–320 are Cytoplasmic-facing; the sequence is LADAFGRRKS. The chain crosses the membrane as a helical span at residues 321 to 341; it reads MVIITTLIILFALFAFNPLLG. At 342–345 the chain is on the periplasmic side; that stretch reads SGNP. The helical transmembrane segment at 346-366 threads the bilayer; that stretch reads ILVFAFLLLGLSLMGLTFGPM. The Cytoplasmic portion of the chain corresponds to 367-384; the sequence is GALLPELFPTEVRYTGAS. The helical transmembrane segment at 385–405 threads the bilayer; the sequence is FSYNVASILGASVAPYIAAWL. Residues 406–410 lie on the Periplasmic side of the membrane; the sequence is QTNYG. The chain crosses the membrane as a helical span at residues 411 to 431; it reads LGAVGLYLAAMAGLTLIALLL. The Cytoplasmic portion of the chain corresponds to 432-440; the sequence is THETRHQSL.

The protein belongs to the major facilitator superfamily. Metabolite:H+ Symporter (MHS) family (TC 2.A.1.6) family.

It localises to the cell inner membrane. This chain is Inner membrane metabolite transport protein YhjE (yhjE), found in Escherichia coli (strain K12).